Reading from the N-terminus, the 274-residue chain is Octanoyltransferase LipM (274 aa).

In terms of domain architecture, BPL/LPL catalytic spans 31-245 (GEVPPTLRLY…GFAEALGARL (215 aa)). Cys-147 (acyl-thioester intermediate) is an active-site residue.

The protein belongs to the octanoyltransferase LipM family. As to quaternary structure, monomer.

It catalyses the reaction octanoyl-[ACP] + L-lysyl-[protein] = N(6)-octanoyl-L-lysyl-[protein] + holo-[ACP] + H(+). It functions in the pathway protein modification; protein lipoylation via endogenous pathway; protein N(6)-(lipoyl)lysine from octanoyl-[acyl-carrier-protein]. Functionally, catalyzes the transfer of endogenously produced octanoic acid from octanoyl-acyl-carrier-protein onto the lipoyl domain of GcvH, an intermediate carrier during protein lipoylation. The chain is Octanoyltransferase LipM from Kyrpidia tusciae (strain DSM 2912 / NBRC 15312 / T2) (Bacillus tusciae).